Here is a 91-residue protein sequence, read N- to C-terminus: Probable Fe(2+)-trafficking protein (91 aa).

It belongs to the Fe(2+)-trafficking protein family.

In terms of biological role, could be a mediator in iron transactions between iron acquisition and iron-requiring processes, such as synthesis and/or repair of Fe-S clusters in biosynthetic enzymes. This chain is Probable Fe(2+)-trafficking protein, found in Actinobacillus pleuropneumoniae serotype 5b (strain L20).